A 293-amino-acid chain; its full sequence is Glutamyl-Q tRNA(Asp) synthetase (293 aa).

L-glutamate contacts are provided by residues 8-12 and glutamate 44; that span reads RFAPT. The 'HIGH' region signature appears at 11–21; that stretch reads PTPSGYLHFGS. Zn(2+) contacts are provided by cysteine 100, cysteine 102, tyrosine 114, and cysteine 118. L-glutamate is bound by residues tyrosine 171 and arginine 189. A 'KMSKS' region motif is present at residues 227 to 231; it reads KLGKS. Lysine 230 lines the ATP pocket.

The protein belongs to the class-I aminoacyl-tRNA synthetase family. GluQ subfamily. It depends on Zn(2+) as a cofactor.

Functionally, catalyzes the tRNA-independent activation of glutamate in presence of ATP and the subsequent transfer of glutamate onto a tRNA(Asp). Glutamate is transferred on the 2-amino-5-(4,5-dihydroxy-2-cyclopenten-1-yl) moiety of the queuosine in the wobble position of the QUC anticodon. This Pseudomonas paraeruginosa (strain DSM 24068 / PA7) (Pseudomonas aeruginosa (strain PA7)) protein is Glutamyl-Q tRNA(Asp) synthetase.